The sequence spans 88 residues: Small ribosomal subunit protein uS19 (88 aa).

This sequence belongs to the universal ribosomal protein uS19 family.

Functionally, protein S19 forms a complex with S13 that binds strongly to the 16S ribosomal RNA. The polypeptide is Small ribosomal subunit protein uS19 (rpsS) (Chlamydia muridarum (strain MoPn / Nigg)).